The following is a 426-amino-acid chain: Methylamine dehydrogenase heavy chain (426 aa).

The N-terminal stretch at 1–31 is a signal peptide; it reads MASARESTPRYLTLIGATLACSALALGAAQA. A disordered region spans residues 32–64; the sequence is QTEPAEPEAPAETAAADAAGQTEGQRGAAEAAA. The cysteines at positions 221 and 236 are disulfide-linked.

The protein belongs to the aromatic amine dehydrogenase heavy chain family. In terms of assembly, tetramer of two light and two heavy chains.

The protein localises to the periplasm. The enzyme catalyses 2 oxidized [amicyanin] + methylamine + H2O = 2 reduced [amicyanin] + formaldehyde + NH4(+) + 2 H(+). Functionally, methylamine dehydrogenase carries out the oxidation of methylamine. Electrons are passed from methylamine dehydrogenase to amicyanin. The polypeptide is Methylamine dehydrogenase heavy chain (mauB) (Paracoccus versutus (Thiobacillus versutus)).